A 175-amino-acid polypeptide reads, in one-letter code: Protein MODIFYING WALL LIGNIN-1 (175 aa).

A signal peptide spans 1-24; that stretch reads MFIFLFGLAAFFLCLSAEFQKAKA. At 25-52 the chain is on the cytoplasmic side; sequence LLRAQVFLKGKDLKWDGESCYLPENRAF. The chain crosses the membrane as a helical span at residues 53-73; the sequence is GLGIAALVCVSVAQIVGNVVI. Over 74–86 the chain is Extracellular; the sequence is CRGFTKTDKTRTT. Residues 87-107 traverse the membrane as a helical segment; that stretch reads IFCIILLLFSWVNFAVAVTLI. Topologically, residues 108–135 are cytoplasmic; sequence SVGASMNREQIYGKGWLNRECYLVKDGV. The helical transmembrane segment at 136–156 threads the bilayer; that stretch reads FAASGFLSVTTMAAILGAFAF. Residues 157-175 are Extracellular-facing; that stretch reads KVKPSLQVENHDKRHTQNV.

Belongs to the DESIGUAL family. As to quaternary structure, interacts with CRK19.

It localises to the cell membrane. Together with MWL2, contributes to secondary cell wall biology, specifically lignin biosynthesis. This Arabidopsis thaliana (Mouse-ear cress) protein is Protein MODIFYING WALL LIGNIN-1.